A 203-amino-acid chain; its full sequence is Large ribosomal subunit protein bL25 (203 aa).

It belongs to the bacterial ribosomal protein bL25 family. CTC subfamily. In terms of assembly, part of the 50S ribosomal subunit; part of the 5S rRNA/L5/L18/L25 subcomplex. Contacts the 5S rRNA. Binds to the 5S rRNA independently of L5 and L18.

Its function is as follows. This is one of the proteins that binds to the 5S RNA in the ribosome where it forms part of the central protuberance. The sequence is that of Large ribosomal subunit protein bL25 from Rickettsia prowazekii (strain Madrid E).